Reading from the N-terminus, the 360-residue chain is Phospho-N-acetylmuramoyl-pentapeptide-transferase (360 aa).

The Periplasmic segment spans residues methionine 1–arginine 25. A helical transmembrane segment spans residues alanine 26–alanine 46. The Cytoplasmic segment spans residues histidine 47–threonine 71. A helical membrane pass occupies residues proline 72–tyrosine 92. Proline 93 is a topological domain (periplasmic). A helical membrane pass occupies residues serine 94–valine 114. Residues aspartate 115–arginine 131 lie on the Cytoplasmic side of the membrane. Residues tryptophan 132 to glycine 152 form a helical membrane-spanning segment. The Periplasmic portion of the chain corresponds to lysine 153 to aspartate 167. A helical transmembrane segment spans residues valine 168 to glycine 188. Residues asparagine 189–aspartate 198 lie on the Cytoplasmic side of the membrane. Residues glycine 199–threonine 219 form a helical membrane-spanning segment. The Periplasmic segment spans residues glycine 220–histidine 235. Residues alanine 236–phenylalanine 256 form a helical membrane-spanning segment. The Cytoplasmic segment spans residues asparagine 257–glutamine 262. Residues valine 263–leucine 283 form a helical membrane-spanning segment. The Periplasmic portion of the chain corresponds to leucine 284–glutamate 287. The helical transmembrane segment at phenylalanine 288 to valine 308 threads the bilayer. Residues glycine 309–arginine 337 are Cytoplasmic-facing. The chain crosses the membrane as a helical span at residues valine 338–lysine 358. The Periplasmic portion of the chain corresponds to valine 359–arginine 360.

The protein belongs to the glycosyltransferase 4 family. MraY subfamily. Mg(2+) is required as a cofactor.

Its subcellular location is the cell inner membrane. It catalyses the reaction UDP-N-acetyl-alpha-D-muramoyl-L-alanyl-gamma-D-glutamyl-meso-2,6-diaminopimeloyl-D-alanyl-D-alanine + di-trans,octa-cis-undecaprenyl phosphate = di-trans,octa-cis-undecaprenyl diphospho-N-acetyl-alpha-D-muramoyl-L-alanyl-D-glutamyl-meso-2,6-diaminopimeloyl-D-alanyl-D-alanine + UMP. The protein operates within cell wall biogenesis; peptidoglycan biosynthesis. Catalyzes the initial step of the lipid cycle reactions in the biosynthesis of the cell wall peptidoglycan: transfers peptidoglycan precursor phospho-MurNAc-pentapeptide from UDP-MurNAc-pentapeptide onto the lipid carrier undecaprenyl phosphate, yielding undecaprenyl-pyrophosphoryl-MurNAc-pentapeptide, known as lipid I. In Escherichia coli O157:H7, this protein is Phospho-N-acetylmuramoyl-pentapeptide-transferase.